The chain runs to 529 residues: Corneodesmosin (529 aa).

The signal sequence occupies residues 1–32; that stretch reads MGSSRAPWMGRVGGHGMMALLLAGLLLPGTLA. 2 disordered regions span residues 38-248 and 383-492; these read FSDP…SVSG and GSTG…SSAG. Low complexity-rich tracts occupy residues 58 to 83, 90 to 100, 111 to 175, 189 to 231, 392 to 408, and 426 to 441; these read GKGD…SARS, GSSSGSSIAQG, GYSQ…NGSA, PSQP…SGGP, SPSS…SSSS, and PGTG…QSSG. The N-linked (GlcNAc...) asparagine glycan is linked to Asn172. A compositionally biased stretch (polar residues) spans 449–467; that stretch reads GSKSSSSGHPCMSVSSLTL.

In terms of tissue distribution, exclusively expressed in skin.

The protein resides in the secreted. Functionally, important for the epidermal barrier integrity. This is Corneodesmosin (CDSN) from Homo sapiens (Human).